The sequence spans 573 residues: O-fucosyltransferase 20 (573 aa).

Topologically, residues 1-60 are cytoplasmic; the sequence is MALSKNSNSNSFNKKKVSYISVPSQIINSLSSSSLQSLLVSPKKSSRSTNRFSFSYRNPR. The helical; Signal-anchor for type II membrane protein transmembrane segment at 61 to 81 threads the bilayer; it reads IWFFTLFLVSLFGMLKLGFNV. Residues 82-573 lie on the Lumenal side of the membrane; that stretch reads DPISLPFSRY…RQQQEQQSDA (492 aa). N-linked (GlcNAc...) asparagine glycosylation occurs at Asn138. 344–346 serves as a coordination point for substrate; the sequence is HLR. 2 N-linked (GlcNAc...) asparagine glycosylation sites follow: Asn385 and Asn517. A compositionally biased stretch (basic and acidic residues) spans 547–556; sequence AGKDVTKHPV. The disordered stretch occupies residues 547–573; that stretch reads AGKDVTKHPVPECMCSDRQQQEQQSDA. A compositionally biased stretch (polar residues) spans 563 to 573; sequence DRQQQEQQSDA.

It belongs to the glycosyltransferase GT106 family. In terms of assembly, interacts with RACK1A. As to expression, highly expressed in shoot apical meristem (SAM) and in young vegetative tissues.

Its subcellular location is the golgi apparatus membrane. The protein operates within glycan metabolism. May play a role in the biosynthesis of matrix polysaccharides and contribute to the biomechanics and development of the plant cell wall. This chain is O-fucosyltransferase 20, found in Arabidopsis thaliana (Mouse-ear cress).